A 218-amino-acid chain; its full sequence is DNA ADP-ribosyl transferase (218 aa).

The region spanning 14-217 (ALIWRIVHRD…SVHTRSGWYF (204 aa)) is the DarT domain. Residues 18–20 (RIV) and R57 each bind NAD(+). The tract at residues 41-59 (QAENWINIGNPELIGKRAG) is NAD(+)-binding element. The active-site Proton acceptor is the R57. The segment at 123–170 (TDSHAYYNWTNYYTSLNSLDQIDWPILQARDFRRDPDDPAKFERYQAE) is ADP-ribosylating turn-turn loop. E170 is a catalytic residue.

The protein belongs to the DarT ADP-ribosyltransferase family. As to quaternary structure, interacts with cognate antitoxin DarG (via C-terminus); this heterodimeric complex neutralizes the toxic effect of DarT by preventing ssDNA binding to DarT and consequently inactivating the toxin by direct protein-protein interactions.

It catalyses the reaction a thymidine in DNA + NAD(+) = an N-(ADP-alpha-D-ribosyl)-thymidine in DNA + nicotinamide + H(+). Functionally, toxic component of the hybrid type II/IV toxin-antitoxin (TA) system DarTG, which plays a crucial role in controlling bacterial growth and bacteriophage infection. ADP-ribosylates ssDNA in the sequence TTT/TCT. In case of phage infection, DarT toxin ADP-ribosylates DNA, which inhibits both viral DNA and RNA synthesis and leads to abortive infection. Its toxic effect is neutralized by cognate antitoxin DarG. May target ssDNA loops during DNA replication, probably modifies thymidine. Wild-type protein cannot be expressed at low levels in the absence of its cognate antitoxin, but a mutant protein (G49D) can be expressed, which slows growth, rapidly inhibits DNA replication, and induces RecA expression and the SOS response. The slow growth phenotype can be suppressed by cognate antitoxin DarG. Has no activity on dsDNA in vitro. In vivo ADP-ribosylates genomic DNA (gDNA). Genetic data strongly suggests ADP-ribosylation by DarT probably generates ssDNA gaps that are repaired by the RecFOR-mediated homologous recombination pathway (RuvAB, RecG) and resolved by RuvC. In some cases these gaps probably migrate into dsDNA, where they are resolved by nucleotide excision repair (NER) detected by UvrAB, excised by UvrC, removed by UvrD, and repaired by Pol I and ligase. Other pathways may also be involved in ADP-ribosylation removal from DNA. This chain is DNA ADP-ribosyl transferase, found in Escherichia coli O127:H6 (strain E2348/69 / EPEC).